The primary structure comprises 71 residues: uncharacterized protein (71 aa).

Residues 12–34 traverse the membrane as a helical segment; sequence GYLSLTLVTLPVCSSLHCYFLWT.

It is found in the membrane. This is an uncharacterized protein from Dictyostelium discoideum (Social amoeba).